The primary structure comprises 228 residues: Fluoride-specific ion channel FluC (228 aa).

The next 7 membrane-spanning stretches (helical) occupy residues 3-23, 37-57, 72-92, 101-121, 141-161, 172-192, and 202-222; these read LSLF…FWVS, GTLF…VMMI, VGFL…LALF, ALNV…GAVL, IFGA…LAFA, LVLV…LVVT, and LWGA…LGLV. Gly76 and Thr79 together coordinate Na(+).

This sequence belongs to the fluoride channel Fluc/FEX (TC 1.A.43) family.

It localises to the cell inner membrane. The enzyme catalyses fluoride(in) = fluoride(out). Na(+) is not transported, but it plays an essential structural role and its presence is essential for fluoride channel function. Its function is as follows. Fluoride-specific ion channel. Important for reducing fluoride concentration in the cell, thus reducing its toxicity. The protein is Fluoride-specific ion channel FluC of Methylococcus capsulatus (strain ATCC 33009 / NCIMB 11132 / Bath).